The sequence spans 152 residues: Cell division protein SepF (152 aa).

Positions 21–56 are disordered; that stretch reads EYIETEQDHPEEHEQQKDKQPAYAQKPQGKQNVVSL. A compositionally biased stretch (basic and acidic residues) spans 26-40; it reads EQDHPEEHEQQKDKQ.

It belongs to the SepF family. In terms of assembly, homodimer. Interacts with FtsZ.

It is found in the cytoplasm. Cell division protein that is part of the divisome complex and is recruited early to the Z-ring. Probably stimulates Z-ring formation, perhaps through the cross-linking of FtsZ protofilaments. Its function overlaps with FtsA. The protein is Cell division protein SepF of Bacillus velezensis (strain DSM 23117 / BGSC 10A6 / LMG 26770 / FZB42) (Bacillus amyloliquefaciens subsp. plantarum).